Consider the following 245-residue polypeptide: Tetraspanin-6 (245 aa).

Residues 1 to 19 are Cytoplasmic-facing; sequence MASPSRRLQTKPVITCLKS. A helical transmembrane segment spans residues 20-40; the sequence is VLLIYTFIFWITGVILLAVGI. Over 41 to 59 the chain is Extracellular; that stretch reads WGKVSLENYFSLLNEKATN. Residues 60–80 form a helical membrane-spanning segment; sequence VPFVLIGTGTVIILLGTFGCF. Topologically, residues 81 to 93 are cytoplasmic; the sequence is ATCRTSAWMLKLY. Residues 94 to 114 traverse the membrane as a helical segment; it reads AMFLTLIFLVELVAAIVGFVF. Over 115–208 the chain is Extracellular; the sequence is RHEIKNSFKS…IKVMTTIESE (94 aa). Residue asparagine 134 is glycosylated (N-linked (GlcNAc...) asparagine). A helical membrane pass occupies residues 209-229; sequence MGVVAGISFGVACFQLIGIFL. At 230 to 245 the chain is on the cytoplasmic side; the sequence is AYCLSRAITNNQYEIV.

This sequence belongs to the tetraspanin (TM4SF) family.

It localises to the membrane. This chain is Tetraspanin-6 (Tspan6), found in Mus musculus (Mouse).